A 342-amino-acid chain; its full sequence is MTQKILNPVTGRFVKVDGSTGKKIKTGNIYDVNNILSSKLTKKIFDKIRRNDLAKEERETQQLTKKISKGIFDKIRSENKKYEKNTQKLTKKMVLDIFSKIYKEDSRKSKTQCVVSEKKDNGGVLLTEDLGKIFEKSICMLYDTPYIGPYKYGNEKPMLLKTRLTKLLDFFPELTHTAAGGALHDFTTKNSRYLSAKTSKKKDGKVAPQKIGQPTKKKFLEFFNLPPDTSNDDIKLFIKKNIVRILDEYFKYTFDDTIIYYNEVNNIIMLVKTLKKVKFDPNLIEFGCNKPGKSWKESTILFYNNKRLGEFQIHTSRSCIKFRWFFENILLLFPDNFEVTIL.

The catalysed reaction is Endonucleolytic cleavage of DNA to give specific double-stranded fragments with terminal 5'-phosphates.. Its function is as follows. A P subtype restriction enzyme that recognizes the double-stranded sequence 5'-CATG-3' and cleaves after C-1. The polypeptide is Type II restriction enzyme CviAII (CVIAIIR) (Chlorella (PBCV-1)).